Here is a 502-residue protein sequence, read N- to C-terminus: tRNA-2-methylthio-N(6)-dimethylallyladenosine synthase (502 aa).

Residues 12–129 (RTYQVRTYGC…LPVLLERARH (118 aa)) enclose the MTTase N-terminal domain. [4Fe-4S] cluster is bound by residues Cys-21, Cys-58, Cys-92, Cys-166, Cys-170, and Cys-173. The 232-residue stretch at 152-383 (RESTYAGWVS…ACVEEITWAE (232 aa)) folds into the Radical SAM core domain. Residues 385–455 (RRLVGETVEV…PHHLNADGEP (71 aa)) enclose the TRAM domain. The disordered stretch occupies residues 451–502 (ADGEPLAHRRTPAGDAAEAGRRPRTAGVSLGLPTVGAPPSPVPPAASSACAC).

Belongs to the methylthiotransferase family. MiaB subfamily. In terms of assembly, monomer. Requires [4Fe-4S] cluster as cofactor.

The protein resides in the cytoplasm. The enzyme catalyses N(6)-dimethylallyladenosine(37) in tRNA + (sulfur carrier)-SH + AH2 + 2 S-adenosyl-L-methionine = 2-methylsulfanyl-N(6)-dimethylallyladenosine(37) in tRNA + (sulfur carrier)-H + 5'-deoxyadenosine + L-methionine + A + S-adenosyl-L-homocysteine + 2 H(+). Functionally, catalyzes the methylthiolation of N6-(dimethylallyl)adenosine (i(6)A), leading to the formation of 2-methylthio-N6-(dimethylallyl)adenosine (ms(2)i(6)A) at position 37 in tRNAs that read codons beginning with uridine. The protein is tRNA-2-methylthio-N(6)-dimethylallyladenosine synthase of Salinispora arenicola (strain CNS-205).